Reading from the N-terminus, the 217-residue chain is ATP phosphoribosyltransferase (217 aa).

It belongs to the ATP phosphoribosyltransferase family. Short subfamily. As to quaternary structure, heteromultimer composed of HisG and HisZ subunits.

It localises to the cytoplasm. It catalyses the reaction 1-(5-phospho-beta-D-ribosyl)-ATP + diphosphate = 5-phospho-alpha-D-ribose 1-diphosphate + ATP. The protein operates within amino-acid biosynthesis; L-histidine biosynthesis; L-histidine from 5-phospho-alpha-D-ribose 1-diphosphate: step 1/9. Functionally, catalyzes the condensation of ATP and 5-phosphoribose 1-diphosphate to form N'-(5'-phosphoribosyl)-ATP (PR-ATP). Has a crucial role in the pathway because the rate of histidine biosynthesis seems to be controlled primarily by regulation of HisG enzymatic activity. In Parasynechococcus marenigrum (strain WH8102), this protein is ATP phosphoribosyltransferase.